Consider the following 243-residue polypeptide: Carboxy-S-adenosyl-L-methionine synthase (243 aa).

Residues Tyr-40, 65–67 (GCS), 90–91 (DN), 118–119 (DI), Asn-133, and Arg-200 each bind S-adenosyl-L-methionine.

This sequence belongs to the class I-like SAM-binding methyltransferase superfamily. Cx-SAM synthase family. In terms of assembly, homodimer.

It carries out the reaction prephenate + S-adenosyl-L-methionine = carboxy-S-adenosyl-L-methionine + 3-phenylpyruvate + H2O. Its function is as follows. Catalyzes the conversion of S-adenosyl-L-methionine (SAM) to carboxy-S-adenosyl-L-methionine (Cx-SAM). The chain is Carboxy-S-adenosyl-L-methionine synthase from Shewanella baltica (strain OS223).